A 659-amino-acid polypeptide reads, in one-letter code: Mannosyl-oligosaccharide 1,2-alpha-mannosidase IA (659 aa).

The Cytoplasmic portion of the chain corresponds to M1–K48. Residues F49–L69 traverse the membrane as a helical; Signal-anchor for type II membrane protein segment. The Lumenal portion of the chain corresponds to P70–K659. Residues Q88–A121 are disordered. Over residues A91–E113 the composition is skewed to basic and acidic residues. Residues C482 and C514 are joined by a disulfide bond. Residue E528 is the Proton donor of the active site. T639 contributes to the Ca(2+) binding site.

Belongs to the glycosyl hydrolase 47 family. Ca(2+) is required as a cofactor.

The protein resides in the endoplasmic reticulum membrane. The enzyme catalyses N(4)-(alpha-D-Man-(1-&gt;2)-alpha-D-Man-(1-&gt;2)-alpha-D-Man-(1-&gt;3)-[alpha-D-Man-(1-&gt;2)-alpha-D-Man-(1-&gt;3)-[alpha-D-Man-(1-&gt;2)-alpha-D-Man-(1-&gt;6)]-alpha-D-Man-(1-&gt;6)]-beta-D-Man-(1-&gt;4)-beta-D-GlcNAc-(1-&gt;4)-beta-D-GlcNAc)-L-asparaginyl-[protein] (N-glucan mannose isomer 9A1,2,3B1,2,3) + 4 H2O = N(4)-(alpha-D-Man-(1-&gt;3)-[alpha-D-Man-(1-&gt;3)-[alpha-D-Man-(1-&gt;6)]-alpha-D-Man-(1-&gt;6)]-beta-D-Man-(1-&gt;4)-beta-D-GlcNAc-(1-&gt;4)-beta-D-GlcNAc)-L-asparaginyl-[protein] (N-glucan mannose isomer 5A1,2) + 4 beta-D-mannose. It catalyses the reaction N(4)-(alpha-D-Man-(1-&gt;2)-alpha-D-Man-(1-&gt;2)-alpha-D-Man-(1-&gt;3)-[alpha-D-Man-(1-&gt;3)-[alpha-D-Man-(1-&gt;2)-alpha-D-Man-(1-&gt;6)]-alpha-D-Man-(1-&gt;6)]-beta-D-Man-(1-&gt;4)-beta-D-GlcNAc-(1-&gt;4)-beta-D-GlcNAc)-L-asparaginyl-[protein] (N-glucan mannose isomer 8A1,2,3B1,3) + 3 H2O = N(4)-(alpha-D-Man-(1-&gt;3)-[alpha-D-Man-(1-&gt;3)-[alpha-D-Man-(1-&gt;6)]-alpha-D-Man-(1-&gt;6)]-beta-D-Man-(1-&gt;4)-beta-D-GlcNAc-(1-&gt;4)-beta-D-GlcNAc)-L-asparaginyl-[protein] (N-glucan mannose isomer 5A1,2) + 3 beta-D-mannose. It participates in protein modification; protein glycosylation. Its activity is regulated as follows. Inhibited by both 1-deoxymannojirimycin and kifunensine. In terms of biological role, involved in the maturation of Asn-linked oligosaccharides. Progressively trim alpha-1,2-linked mannose residues from Man(9)GlcNAc(2) to produce Man(5)GlcNAc(2). This is Mannosyl-oligosaccharide 1,2-alpha-mannosidase IA (MAN1A1) from Sus scrofa (Pig).